Here is a 306-residue protein sequence, read N- to C-terminus: Grixazone synthase (306 aa).

His-39, His-58, His-67, His-222, His-226, and His-248 together coordinate Cu(2+).

This sequence belongs to the tyrosinase family. Cu(2+) serves as cofactor.

It carries out the reaction 2 3-amino-4-hydroxybenzoate + N-acetyl-L-cysteine + 2 O2 + H(+) = grixazone B + CO2 + 4 H2O. The catalysed reaction is 2 3-amino-4-hydroxybenzaldehyde + N-acetyl-L-cysteine + 2 O2 = grixazone A + formate + 3 H2O + H(+). The enzyme catalyses 4 2-aminophenol + 3 O2 = 2 2-aminophenoxazin-3-one + 6 H2O. With respect to regulation, inhibited by 3-amino-4-hydroxybenzensulfonic acid, 4-hydroxy-3-nitrobenzaldehyde, L-tyrosine, p-hydroxybenzaldehyde. Activated by the copper chaperone GriE. Its function is as follows. Involved in the biosynthesis of the parasiticide antibiotic grixazone. Catalyzes the oxidation of 3-amino-4-hydroxybenzoate (3,4-AHBOA) to yield the corresponding quinone imine which is then non-enzymatically conjugated with the thiol group of N-acetylcysteine. The resultant compound is oxidized to its quinone imine enzymatically and is then dimerized non-enzymatically with another quinone imine oxidized by GriF to yield grixazone B. 3-amino-4-hydroxybenzaldehyde (3,4-AHBAL) can also be used as substrate to yield grixazone A. In the grixazone biosynthetic pathway, it can also function as an o-aminophenol oxidase that catalyzes the formation of the phenoxazinone chromophore from alpha-aminophenol. It can also use 2-amino-4-methylphenol, and to a lesser extent, 3,4-dihydroxybenzaldehyde, catechol and 3,4-dihydroxy-L-phenylalanine (L-DOPA) as substrates. In contrast to tyrosinases, it does not display monophenolase activity. The polypeptide is Grixazone synthase (Streptomyces griseus subsp. griseus (strain JCM 4626 / CBS 651.72 / NBRC 13350 / KCC S-0626 / ISP 5235)).